Here is a 461-residue protein sequence, read N- to C-terminus: Cysteine--tRNA ligase (461 aa).

Zn(2+) is bound at residue C30. Positions 32 to 42 (PTVYSYAHIGN) match the 'HIGH' region motif. The Zn(2+) site is built by C212, H237, and E241. A 'KMSKS' region motif is present at residues 270–274 (KMSKS). K273 serves as a coordination point for ATP.

Belongs to the class-I aminoacyl-tRNA synthetase family. Monomer. Zn(2+) is required as a cofactor.

It localises to the cytoplasm. It carries out the reaction tRNA(Cys) + L-cysteine + ATP = L-cysteinyl-tRNA(Cys) + AMP + diphosphate. The protein is Cysteine--tRNA ligase of Maricaulis maris (strain MCS10) (Caulobacter maris).